A 428-amino-acid chain; its full sequence is UPF0229 protein YeaH (428 aa).

The segment covering 78-90 (GNDHFIQNDRIER) has biased composition (basic and acidic residues). A disordered region spans residues 78–111 (GNDHFIQNDRIERPQGGGGGGSGSGQGQASQDGE). Gly residues predominate over residues 92-103 (QGGGGGGSGSGQ).

Belongs to the UPF0229 family.

This chain is UPF0229 protein YeaH, found in Salmonella choleraesuis (strain SC-B67).